We begin with the raw amino-acid sequence, 220 residues long: MOB kinase activator-like 3 (220 aa).

Zn(2+) is bound by residues C83, C88, H165, and H170.

This sequence belongs to the MOB1/phocein family.

This is MOB kinase activator-like 3 (Mob3) from Drosophila melanogaster (Fruit fly).